The chain runs to 182 residues: Lipid A acyltransferase PagP (182 aa).

An N-terminal signal peptide occupies residues 1-21 (MTQYFRSLAFFLLPVPATAMA). Cys-22 carries the N-palmitoyl cysteine lipid modification. The S-diacylglycerol cysteine moiety is linked to residue Cys-22. Active-site residues include His-55, Asp-98, and Ser-99.

Belongs to the lipid A palmitoyltransferase family. Homodimer.

Its subcellular location is the cell outer membrane. The catalysed reaction is a lipid A + a 1,2-diacyl-sn-glycero-3-phosphocholine = a hepta-acyl lipid A + a 2-acyl-sn-glycero-3-phosphocholine. The enzyme catalyses a lipid IVA + a 1,2-diacyl-sn-glycero-3-phosphocholine = a lipid IVB + a 2-acyl-sn-glycero-3-phosphocholine. It catalyses the reaction a lipid IIA + a 1,2-diacyl-sn-glycero-3-phosphocholine = a lipid IIB + a 2-acyl-sn-glycero-3-phosphocholine. Functionally, transfers a fatty acid residue from the sn-1 position of a phospholipid to the N-linked hydroxyfatty acid chain on the proximal unit of lipid A or its precursors. This is Lipid A acyltransferase PagP from Bordetella pertussis (strain CS).